A 276-amino-acid chain; its full sequence is NAD-capped RNA hydrolase NudC (276 aa).

A substrate-binding site is contributed by arginine 82. Residues cysteine 112 and cysteine 115 each coordinate Zn(2+). Residue glutamate 125 participates in substrate binding. Residues cysteine 130 and cysteine 133 each coordinate Zn(2+). A substrate-binding site is contributed by tyrosine 138. The 124-residue stretch at 139–262 folds into the Nudix hydrolase domain; sequence PRISPSMIVL…SIARYLIDLY (124 aa). Residues alanine 172, glutamate 188, and glutamate 192 each coordinate a divalent metal cation. Positions 173 to 194 match the Nudix box motif; that stretch reads GFAEPGESAEECLVREVREEVA. 206–213 is a binding site for substrate; that stretch reads QCWPFPHS. Position 233 (glutamate 233) interacts with a divalent metal cation. Substrate is bound at residue alanine 255.

Belongs to the Nudix hydrolase family. NudC subfamily. In terms of assembly, homodimer. The cofactor is Mg(2+). It depends on Mn(2+) as a cofactor. Zn(2+) is required as a cofactor.

It carries out the reaction a 5'-end NAD(+)-phospho-ribonucleoside in mRNA + H2O = a 5'-end phospho-adenosine-phospho-ribonucleoside in mRNA + beta-nicotinamide D-ribonucleotide + 2 H(+). The enzyme catalyses NAD(+) + H2O = beta-nicotinamide D-ribonucleotide + AMP + 2 H(+). The catalysed reaction is NADH + H2O = reduced beta-nicotinamide D-ribonucleotide + AMP + 2 H(+). Functionally, mRNA decapping enzyme that specifically removes the nicotinamide adenine dinucleotide (NAD) cap from a subset of mRNAs by hydrolyzing the diphosphate linkage to produce nicotinamide mononucleotide (NMN) and 5' monophosphate mRNA. The NAD-cap is present at the 5'-end of some mRNAs and stabilizes RNA against 5'-processing. Has preference for mRNAs with a 5'-end purine. Catalyzes the hydrolysis of a broad range of dinucleotide pyrophosphates. This is NAD-capped RNA hydrolase NudC from Pseudomonas entomophila (strain L48).